We begin with the raw amino-acid sequence, 760 residues long: Alpha-amylase (760 aa).

The N-terminal stretch at 1-34 (MSKRSKLLKRRMLSLSVICVLIGYGPVFNPVRSQ) is a signal peptide. Positions 143, 184, and 192 each coordinate Ca(2+). Asp222 functions as the Nucleophile in the catalytic mechanism. His226 lines the Ca(2+) pocket. Glu262 functions as the Proton donor in the catalytic mechanism.

Belongs to the glycosyl hydrolase 13 family. As to quaternary structure, monomer. Ca(2+) serves as cofactor.

The catalysed reaction is Endohydrolysis of (1-&gt;4)-alpha-D-glucosidic linkages in polysaccharides containing three or more (1-&gt;4)-alpha-linked D-glucose units.. The protein is Alpha-amylase (amyA) of Clostridium acetobutylicum (strain ATCC 824 / DSM 792 / JCM 1419 / IAM 19013 / LMG 5710 / NBRC 13948 / NRRL B-527 / VKM B-1787 / 2291 / W).